Reading from the N-terminus, the 330-residue chain is ADP-L-glycero-D-manno-heptose-6-epimerase (330 aa).

Residues 11–12, 32–33, Lys39, Lys54, 75–79, and Asn92 contribute to the NADP(+) site; these read FI, DN, and EGACS. The Proton acceptor role is filled by Tyr139. Residue Lys143 participates in NADP(+) binding. Asn168 contacts substrate. NADP(+)-binding residues include Val169 and Lys177. Lys177 functions as the Proton acceptor in the catalytic mechanism. Residues Arg179, His186, 200-203, Arg213, and Tyr292 each bind substrate; that span reads FGEY.

Belongs to the NAD(P)-dependent epimerase/dehydratase family. HldD subfamily. Homopentamer. NADP(+) is required as a cofactor.

The enzyme catalyses ADP-D-glycero-beta-D-manno-heptose = ADP-L-glycero-beta-D-manno-heptose. It participates in nucleotide-sugar biosynthesis; ADP-L-glycero-beta-D-manno-heptose biosynthesis; ADP-L-glycero-beta-D-manno-heptose from D-glycero-beta-D-manno-heptose 7-phosphate: step 4/4. Its function is as follows. Catalyzes the interconversion between ADP-D-glycero-beta-D-manno-heptose and ADP-L-glycero-beta-D-manno-heptose via an epimerization at carbon 6 of the heptose. The chain is ADP-L-glycero-D-manno-heptose-6-epimerase from Paraburkholderia phymatum (strain DSM 17167 / CIP 108236 / LMG 21445 / STM815) (Burkholderia phymatum).